A 720-amino-acid polypeptide reads, in one-letter code: Pollen receptor-like kinase 1 (720 aa).

One copy of the LRR 1; degenerate repeat lies at 40–64 (LCSRGHLLIIFLLLVSPFNDAAVDV). One copy of the LRR 2; degenerate repeat lies at 123–146 (LGVLCYEGDVWGLQLENLDLSGVI). LRR repeat units follow at residues 154–179 (LHFLRTLSFMNNSFKGQCLIGISLEP), 226–248 (LPQVFELSLENNRFTGSIPHFPP), and 249–273 (NVLKVLNLSNNQLEGPIPPALSLMD). Positions 288 to 319 (LESACNSPSQEANNPDSRNSSTISGQSSTDVI) are disordered. The segment covering 291–317 (ACNSPSQEANNPDSRNSSTISGQSSTD) has biased composition (polar residues). A helical transmembrane segment spans residues 330–350 (MLIVAVCLVVLCLLIVLILII). 2 stretches are compositionally biased toward polar residues: residues 356–382 (SSSQNPQPVESNYSNNDRDQNAFTSSA) and 389–405 (LSGNSTYSNNQHSNSNK). The tract at residues 356–409 (SSSQNPQPVESNYSNNDRDQNAFTSSAPDDHVTLSGNSTYSNNQHSNSNKAEAP) is disordered. Positions 434–702 (RASAEVLGSG…KEVVQSIQSL (269 aa)) constitute a Protein kinase domain. ATP is bound by residues 440–448 (LGSGNLGSS) and lysine 462.

It belongs to the protein kinase superfamily. Interacts with KIP1. In terms of processing, autophosphorylated. Expressed in mature pollen grains and pollen tubes, but not in style, petal, leaf, root or sepal. Very low expression in the ovary.

The protein resides in the microsome membrane. The protein localises to the cytoplasm. It carries out the reaction L-seryl-[protein] + ATP = O-phospho-L-seryl-[protein] + ADP + H(+). The enzyme catalyses L-threonyl-[protein] + ATP = O-phospho-L-threonyl-[protein] + ADP + H(+). The catalysed reaction is L-tyrosyl-[protein] + ATP = O-phospho-L-tyrosyl-[protein] + ADP + H(+). In terms of biological role, dual-specificity kinase with both serine/threonine and tyrosine kinase activities. Required for postmeiotic development of microspores. Involved in embryo sac development at the late stages of megagametogenesis. Involved in the phosphorylation of KIP1. The polypeptide is Pollen receptor-like kinase 1 (Petunia integrifolia (Violet-flowered petunia)).